Here is a 3033-residue protein sequence, read N- to C-terminus: Genome polyprotein (3033 aa).

An N-acetylserine; by host modification is found at serine 2. Residues 2–23 form an interaction with STAT1 region; sequence STNPKPQRKTKRNTNRRPQDVK. Residues 2–58 are interaction with EIF2AK2/PKR; it reads STNPKPQRKTKRNTNRRPQDVKFPGGGQIVGGVYLLPRRGPRLGVRATRKTSERSQP. Residues 2–59 are interaction with DDX3X; it reads STNPKPQRKTKRNTNRRPQDVKFPGGGQIVGGVYLLPRRGPRLGVRATRKTSERSQPR. The tract at residues 2-75 is disordered; sequence STNPKPQRKT…PKDRRSAGKS (74 aa). Over 2–168 the chain is Cytoplasmic; sequence STNPKPQRKT…EDGINYATGN (167 aa). 2 short sequence motifs (nuclear localization signal) span residues 5–13 and 38–43; these read PKPQRKTKR and PRRGPR. Over residues 7–16 the composition is skewed to basic residues; sequence PQRKTKRNTN. Positions 32-47 are enriched in low complexity; the sequence is GGVYLLPRRGPRLGVR. The residue at position 53 (serine 53) is a Phosphoserine; by host. 2 short sequence motifs (nuclear localization signal) span residues 58 to 64 and 66 to 71; these read PRGRRQP and PKDRRS. Residues serine 99 and serine 116 each carry the phosphoserine; by host modification. Residues 112–152 are important for endoplasmic reticulum and mitochondrial localization; it reads PRHRSRNLGKVIDTLTCGFADLMGYIPVVGAPVGGVARALA. The interaction with APOA2 stretch occupies residues 122 to 173; sequence VIDTLTCGFADLMGYIPVVGAPVGGVARALAHGVRVLEDGINYATGNLPGCS. The important for lipid droplets localization stretch occupies residues 164-167; it reads YATG. Residues 169–189 form a helical membrane-spanning segment; sequence LPGCSFSIFLLALLSCMSVPV. A propeptide spans 178–191 (ER anchor for the core protein, removed in mature form by host signal peptidase); that stretch reads LLALLSCMSVPVSA. Topologically, residues 190–358 are lumenal; that stretch reads SAVEVKNTSQ…TGAHWGVMFG (169 aa). Residues asparagine 196, asparagine 209, and asparagine 234 are each glycosylated (N-linked (GlcNAc...) asparagine; by host). Residues 265–296 form an important for fusion region; the sequence is IVVSATFCSALYIGDVCGAIMIAAQATIISPQ. Asparagine 305 carries an N-linked (GlcNAc...) asparagine; by host glycan. A helical membrane pass occupies residues 359-379; the sequence is LAYFSMQGAWAKVVVILLLTA. Over 380 to 729 the chain is Lumenal; the sequence is GVDAQTHTIS…WEWVVLLFLL (350 aa). The HVR1 stretch occupies residues 385–412; that stretch reads THTISGHAARTTHGLVSLFTPGSQQNIQ. Residues asparagine 417, asparagine 423, and asparagine 430 are each glycosylated (N-linked (GlcNAc...) (high mannose) asparagine; by host). 4 cysteine pairs are disulfide-bonded: cysteine 429/cysteine 554, cysteine 452/cysteine 459, cysteine 488/cysteine 496, and cysteine 505/cysteine 510. The N-linked (GlcNAc...) asparagine; by host glycan is linked to asparagine 448. Residues 475–480 form an HVR2 region; it reads EENVTN. N-linked (GlcNAc...) asparagine; by host glycosylation occurs at asparagine 477. The tract at residues 482–495 is CD81-binding 1; that stretch reads DNMRPYCWHYPPRP. An N-linked (GlcNAc...) asparagine; by host glycan is attached at asparagine 534. The interval 546 to 553 is CD81-binding 2; sequence PPRGAWFG. N-linked (GlcNAc...) asparagine; by host glycosylation occurs at asparagine 558. 4 disulfides stabilise this stretch: cysteine 566/cysteine 571, cysteine 585/cysteine 589, cysteine 601/cysteine 624, and cysteine 611/cysteine 648. 2 N-linked (GlcNAc...) (high mannose) asparagine; by host glycosylation sites follow: asparagine 627 and asparagine 649. The cysteines at positions 656 and 681 are disulfide-linked. Residues 664–675 form a PKR/eIF2-alpha phosphorylation homology domain (PePHD) region; it reads SQLSPLLHSTTE. Residues 730–750 form a helical membrane-spanning segment; that stretch reads LADARVCACLWMLLLLGQAEA. Residues 751-761 are Lumenal-facing; that stretch reads ALEKLVILHAA. The chain crosses the membrane as a helical span at residues 762 to 782; sequence SAASSHGMLCFIIFFIAAWYI. The Cytoplasmic portion of the chain corresponds to 783–786; the sequence is KGRV. A helical membrane pass occupies residues 787 to 807; that stretch reads TPLVTYSYLGMWSFSLLLLAL. At 808–817 the chain is on the lumenal side; sequence PQQAYALDTT. Residues 818–838 form a helical membrane-spanning segment; it reads EQGQIGLVLLVVISVFTLSPA. Over 839-885 the chain is Cytoplasmic; that stretch reads YKILLCRSLWWLSYLLVRAEALIQDWVPPWQARGGRDGIIWAATIFC. A helical transmembrane segment spans residues 886-906; that stretch reads PGVLFDITNWLLAILGPGYLL. The Peptidase C18 domain occupies 903 to 1030; sequence GYLLRSVLTS…EYTSKGWKLL (128 aa). At 907-932 the chain is on the lumenal side; the sequence is RSVLTSTPYFVRAQALLRICAAVRHL. Residues 908–1210 are protease NS2-3; it reads SVLTSTPYFV…PIESLDVIIR (303 aa). Residue cysteine 926 is the site of S-palmitoyl cysteine; by host attachment. Residues 933 to 953 form a helical membrane-spanning segment; that stretch reads SGGKYVQMMLLTLGKWTGTYI. The segment at 933–953 is interaction with host SCPS1; it reads SGGKYVQMMLLTLGKWTGTYI. Residues 954 to 1661 are Cytoplasmic-facing; the sequence is YDHLSPMSGW…CMQADLEIMT (708 aa). Active-site for protease NS2 activity; shared with dimeric partner residues include histidine 956, glutamate 976, and cysteine 997. The Peptidase S29 domain maps to 1031–1212; the sequence is APITAYAQQT…ESLDVIIRSP (182 aa). Catalysis depends on charge relay system; for serine protease NS3 activity residues histidine 1087 and aspartate 1111. 2 residues coordinate Zn(2+): cysteine 1127 and cysteine 1129. Residue serine 1169 is the Charge relay system; for serine protease NS3 activity of the active site. Cysteine 1175 and histidine 1179 together coordinate Zn(2+). Positions 1221–1373 constitute a Helicase ATP-binding domain; that stretch reads PAVPQTYQVG…PNIEEVALGH (153 aa). Residue 1234 to 1241 participates in ATP binding; the sequence is APTGSGKS. Serine 1241 and glutamate 1321 together coordinate Mg(2+). The DECH box signature appears at 1320 to 1323; it reads DECH. The tract at residues 1490-1502 is RNA-binding; the sequence is QRRGRTGRGRLGI. The chain crosses the membrane as a helical span at residues 1662–1682; sequence STWVLAGGVLAAIAAYCLATG. Residues 1683–1694 are NS3-binding; that stretch reads CVVCIGRVNINQ. Residues 1683–1809 lie on the Cytoplasmic side of the membrane; it reads CVVCIGRVNI…ALTSPLPTST (127 aa). Residues 1810–1830 form a helical membrane-spanning segment; that stretch reads TILLNIMGGWLASQIAPAAGA. Residues 1831–1832 lie on the Lumenal side of the membrane; sequence TG. Residues 1833–1853 traverse the membrane as a helical segment; that stretch reads FVVSGLVGAAVGSIGLGKILV. Residue aspartate 1854 is a topological domain, cytoplasmic. Residues 1855–1875 traverse the membrane as a helical segment; sequence VLAGYGAGISGALVAFKIMSG. Over 1876–1885 the chain is Lumenal; that stretch reads EKPSVEDVVN. A helical membrane pass occupies residues 1886–1906; that stretch reads LLPGILSPGALVVGVICAAIL. Topologically, residues 1907 to 1976 are cytoplasmic; it reads RRHVGQGEGA…WITEDCPVPC (70 aa). Residue cysteine 1976 is the site of S-palmitoyl cysteine; by host attachment. Residues 1977–2007 lie within the membrane without spanning it; that stretch reads AGSWLRDIWDWACTILTDFKNWLSTKLLPKM. Residues 2008–3012 are Cytoplasmic-facing; that stretch reads PGLPFISCQR…YHSVSRARPR (1005 aa). Positions 2015, 2033, 2035, and 2056 each coordinate Zn(2+). Positions 2124 to 2212 are FKBP8-binding; the sequence is EFFSWVDGVQ…ASSSASQLSA (89 aa). Residues 2124 to 2332 form a transcriptional activation region; sequence EFFSWVDGVQ…PTPPPRRRRA (209 aa). The interval 2139–2143 is interaction with non-structural protein 4A; it reads PTPKP. The disordered stretch occupies residues 2193–2212; that stretch reads RLARGSPPSEASSSASQLSA. Residues 2193 to 2460 form an interaction with host SKP2 region; it reads RLARGSPPSE…ALITPCGPEE (268 aa). Phosphoserine; by host is present on residues serine 2198, serine 2201, serine 2205, serine 2208, serine 2211, and serine 2214. Over residues 2198 to 2212 the composition is skewed to low complexity; it reads SPPSEASSSASQLSA. Positions 2214 to 2249 are ISDR; sequence SLRATCTAHAKNYAVEMVDANFFMGSDVTRIESETK. The segment at 2214-2275 is interaction with EIF2AK2/PKR; the sequence is SLRATCTAHA…REPSVPSEYL (62 aa). The tract at residues 2249-2306 is NS4B-binding; that stretch reads KVLILDSLDPSVEEEDEREPSVPSEYLLPKKKFPQALPVWARPDYNPPVVETWKRPDY. A V3 region spans residues 2299–2376; it reads ETWKRPDYDP…MDTTDATDQP (78 aa). The disordered stretch occupies residues 2308-2328; it reads PPTVSGCALPPRVTAPTPPPR. An SH3-binding motif is present at residues 2322-2325; the sequence is APTP. The Nuclear localization signal signature appears at 2327-2335; sequence PRRRRALVL. Lysine 2350 participates in a covalent cross-link: Glycyl lysine isopeptide (Lys-Gly) (interchain with G-Cter in ubiquitin). Positions 2353-2431 are disordered; it reads GQLPPSCDSG…PDLDSGSWST (79 aa). Polar residues predominate over residues 2361 to 2373; the sequence is SGRSTGMDTTDAT. 2 positions are modified to phosphoserine; by host: serine 2471 and serine 2484. The region spanning 2656-2774 is the RdRp catalytic domain; that stretch reads PMGFSYDTRC…ISESQGAEED (119 aa). Aspartate 2662, aspartate 2760, and aspartate 2761 together coordinate Mg(2+). A helical membrane pass occupies residues 3013 to 3033; sequence FLLLCLLLLSVGVGIFLLPAR.

It belongs to the hepacivirus polyprotein family. As to quaternary structure, homooligomer. Interacts with E1 (via C-terminus). Interacts with the non-structural protein 5A. Interacts (via N-terminus) with host STAT1 (via SH2 domain); this interaction results in decreased STAT1 phosphorylation and ubiquitin-mediated proteasome-dependent STAT1 degradation, leading to decreased IFN-stimulated gene transcription. Interacts with host STAT3; this interaction constitutively activates STAT3. Interacts with host LTBR receptor. Interacts with host TNFRSF1A receptor and possibly induces apoptosis. Interacts with host HNRPK. Interacts with host YWHAE. Interacts with host UBE3A/E6AP. Interacts with host DDX3X. Interacts with host APOA2. Interacts with host RXRA protein. Interacts with host SP110 isoform 3/Sp110b; this interaction sequesters the transcriptional corepressor SP110 away from the nucleus. Interacts with host CREB3 nuclear transcription protein; this interaction triggers cell transformation. Interacts with host ACY3. Interacts with host C1QR1. Interacts with host RBM24; this interaction, which enhances the interaction of the mature core protein with 5'-UTR, may inhibit viral translation and favor replication. Interacts with host EIF2AK2/PKR; this interaction induces the autophosphorylation of EIF2AK2. Part of the viral assembly initiation complex composed of NS2, E1, E2, NS3, NS4A, NS5A and the mature core protein. In terms of assembly, forms a heterodimer with envelope glycoprotein E2. Interacts with mature core protein. Interacts with protease NS2. The heterodimer E1/E2 interacts with host CLDN1; this interaction plays a role in viral entry into host cell. Interacts with host SPSB2 (via C-terminus). Part of the viral assembly initiation complex composed of NS2, E1, E2, NS3, NS4A, NS5A and the mature core protein. Interacts with host NEURL3; this interaction prevents E1 binding to glycoprotein E2. Forms a heterodimer with envelope glycoprotein E1. Interacts with host CD81 and SCARB1 receptors; these interactions play a role in viral entry into host cell. Interacts with host EIF2AK2/PKR; this interaction inhibits EIF2AK2 and probably allows the virus to evade the innate immune response. Interacts with host CD209/DC-SIGN and CLEC4M/DC-SIGNR. Interact with host SPCS1; this interaction is essential for viral particle assembly. Interacts with protease NS2. The heterodimer E1/E2 interacts with host CLDN1; this interaction plays a role in viral entry into host cell. Part of the viral assembly initiation complex composed of NS2, E1, E2, NS3, NS4A, NS5A and the mature core protein. Interacts with host SLC3A2/4F2hc; the interaction may facilitate viral entry into host cell. Interacts with human PLSCR1. As to quaternary structure, homohexamer. Homoheptamer. Interacts with protease NS2. In terms of assembly, homodimer. Interacts with host SPCS1; this interaction is essential for viral particle assembly. Interacts with envelope glycoprotein E1. Interacts with envelope glycoprotein E2. Interacts with viroporin p7. Interacts with serine protease/helicase NS3. Part of the replication complex composed of NS2, NS3, NS4A, NS4B, NS5A and the RNA-directed RNA polymerase embedded in an ER-derived membranous web. Part of the viral assembly initiation complex composed of NS2, E1, E2, NS3, NS4A, NS5A and the mature core protein. Interacts with protease NS2. Interacts with non-structural protein 4A; this interaction stabilizes the folding of NS3 serine protease. NS3-NS4A interaction is essential for NS3 activation and allows membrane anchorage of the latter. NS3/NS4A complex also prevents phosphorylation of host IRF3, thus preventing the establishment of dsRNA induced antiviral state. Interacts with host MAVS; this interaction leads to the cleavage and inhibition of host MAVS. Interacts with host TICAM1; this interaction leads to the cleavage and inhibition of host TICAM1. Interacts with host TANK-binding kinase/TBK1; this interaction results in the inhibition of the association between TBK1 and IRF3, which leads to the inhibition of IRF3 activation. Interacts with host RBM24. Part of the replication complex composed of NS2, NS3, NS4A, NS4B, NS5A and the RNA-directed RNA polymerase embedded in an ER-derived membranous web. Part of the viral assembly initiation complex composed of NS2, E1, E2, NS3, NS4A, NS5A and the mature core protein. As to quaternary structure, interacts with NS3 serine protease; this interaction stabilizes the folding of NS3 serine protease. NS3-NS4A interaction is essential for NS3 activation and allows membrane anchorage of the latter. Interacts with non-structural protein 5A (via N-terminus). Part of the replication complex composed of NS2, NS3, NS4A, NS4B, NS5A and the RNA-directed RNA polymerase embedded in an ER-derived membranous web. Part of the viral assembly initiation complex composed of NS2, E1, E2, NS3, NS4A, NS5A and the mature core protein. In terms of assembly, homomultimer. Interacts with non-structural protein NS5A. Interacts with host PLA2G4C; this interaction likely initiates the recruitment of replication complexes to lipid droplets. Interacts with host STING; this interaction disrupts the interaction between STING and TBK1 thereby suppressing the interferon signaling. Part of the replication complex composed of NS2, NS3, NS4A, NS4B, NS5A and the RNA-directed RNA polymerase embedded in an ER-derived membranous web. Monomer. Homodimer; dimerization is required for RNA-binding. Interacts with the mature core protein. Interacts (via N-terminus) with non-structural protein 4A. Interacts with non-structural protein 4B. Interacts (via region D2) with RNA-directed RNA polymerase. Part of the viral assembly initiation complex composed of NS2, E1, E2, NS3, NS4A, NS5A and the mature core protein. Part of the replication complex composed of NS2, NS3, NS4A, NS4B, NS5A and the RNA-directed RNA polymerase embedded in an ER-derived membranous web. Interacts with host GRB2. Interacts with host BIN1. Interacts with host PIK3R1. Interacts with host SRCAP. Interacts with host FKBP8. Interacts (via C-terminus) with host VAPB (via MSP domain). Interacts with host EIF2AK2/PKR; this interaction leads to disruption of EIF2AK2 dimerization by NS5A and probably allows the virus to evade the innate immune response. Interacts (via N-terminus) with host PACSIN2 (via N-terminus); this interaction attenuates protein kinase C alpha-mediated phosphorylation of PACSIN2 by disrupting the interaction between PACSIN2 and PRKCA. Interacts (via N-terminus) with host SRC kinase (via SH2 domain). Interacts with most Src-family kinases. Interacts with host IFI27 and SKP2; promotes the ubiquitin-mediated proteasomal degradation of NS5A. Interacts with host GPS2. Interacts with host TNFRSF21; this interaction allows the modulation by the virus of JNK, p38 MAPK, STAT3, and Akt signaling pathways in a DR6-dependent manner. Interacts (via N-terminus) with host CIDEB (via N-terminus); this interaction seems to regulate the association of HCV particles with APOE. Interacts with host CHKA/Choline Kinase-alpha; CHKA bridges host PI4KA and NS5A and potentiates NS5A-stimulated PI4KA activity, which then facilitates the targeting of the ternary complex to the ER for viral replication. Interacts with host SPSB2 (via C-terminus); this interaction targets NS5A for ubiquitination and degradation. Interacts with host RAB18; this interaction may promote the association of NS5A and other replicase components with lipid droplets. Interacts (via region D2) with host PPIA/CYPA; the interaction stimulates RNA-binding ability of NS5A and is dependent on the peptidyl-prolyl cis-trans isomerase activity of PPIA/CYPA. Interacts with host TRIM14; this interaction induces the degradation of NS5A. As to quaternary structure, homooligomer. Interacts with non-structural protein 5A. Interacts with host VAPB. Interacts with host PRK2/PKN2. Interacts with host HNRNPA1 and SEPT6; these interactions facilitate viral replication. Part of the replication complex composed of NS2, NS3, NS4A, NS4B, NS5A and the RNA-directed RNA polymerase. The cofactor is Zn(2+). Mg(2+) is required as a cofactor. In terms of processing, specific enzymatic cleavages in vivo yield mature proteins. The structural proteins, core, E1, E2 and p7 are produced by proteolytic processing by host signal peptidases. The core protein precursor is synthesized as a 23 kDa, which is retained in the ER membrane through the hydrophobic signal peptide. Cleavage by the signal peptidase releases the 21 kDa mature core protein. The cleavage of the core protein precursor occurs between aminoacids 176 and 188 but the exact cleavage site is not known. Some degraded forms of the core protein appear as well during the course of infection. The other proteins (p7, NS2, NS3, NS4A, NS4B, NS5A and NS5B) are cleaved by the viral proteases. Autoprocessing between NS2 and NS3 is mediated by the NS2 cysteine protease catalytic domain and regulated by the NS3 N-terminal domain. Post-translationally, phosphorylated by host PKC and PKA. Ubiquitinated; mediated by UBE3A and leading to core protein subsequent proteasomal degradation. In terms of processing, highly N-glycosylated. Post-translationally, palmitoylation is required for NS2/3 autoprocessing and E2 recruitment to membranes. Palmitoylated. This modification may play a role in its polymerization or in protein-protein interactions. In terms of processing, phosphorylated on serines in a basal form termed p56. p58 is a hyperphosphorylated form of p56. p56 and p58 coexist in the cell in roughly equivalent amounts. Hyperphosphorylation is dependent on the presence of NS4A. Host CSNK1A1/CKI-alpha or RPS6KB1 kinases may be responsible for NS5A phosphorylation. Post-translationally, tyrosine phosphorylation is essential for the interaction with host SRC. Ubiquitinated. Ubiquitination, most probably at Lys-2350, mediated by host IFI27 and SKP2 leads to proteasomal degradation, restricting viral infection. Ubiquitination by host TRIM22 leads to interruption of viral replication. In terms of processing, the N-terminus is phosphorylated by host PRK2/PKN2.

The protein resides in the host endoplasmic reticulum membrane. Its subcellular location is the host mitochondrion membrane. It localises to the virion. The protein localises to the host cytoplasm. It is found in the host nucleus. The protein resides in the host lipid droplet. Its subcellular location is the virion membrane. It localises to the host mitochondrion. The protein localises to the host cell membrane. It is found in the host perinuclear region. It catalyses the reaction Hydrolysis of four peptide bonds in the viral precursor polyprotein, commonly with Asp or Glu in the P6 position, Cys or Thr in P1 and Ser or Ala in P1'.. The catalysed reaction is a ribonucleoside 5'-triphosphate + H2O = a ribonucleoside 5'-diphosphate + phosphate + H(+). It carries out the reaction ATP + H2O = ADP + phosphate + H(+). The enzyme catalyses RNA(n) + a ribonucleoside 5'-triphosphate = RNA(n+1) + diphosphate. Its activity is regulated as follows. Inhibited by the antiviral drug hexamethylene amiloride. Inhibition by amantadine appears to be genotype-dependent. Also inhibited by long-alkyl-chain iminosugar derivatives. Activity is up-regulated by PRK2/PKN2-mediated phosphorylation. Functionally, packages viral RNA to form a viral nucleocapsid, and promotes virion budding. Participates in the viral particle production as a result of its interaction with the non-structural protein 5A. Binds RNA and may function as a RNA chaperone to induce the RNA structural rearrangements taking place during virus replication. Modulates viral translation initiation by interacting with viral IRES and 40S ribosomal subunit. Affects various cell signaling pathways, host immunity and lipid metabolism. Prevents the establishment of cellular antiviral state by blocking the interferon-alpha/beta (IFN-alpha/beta) and IFN-gamma signaling pathways and by blocking the formation of phosphorylated STAT1 and promoting ubiquitin-mediated proteasome-dependent degradation of STAT1. Activates STAT3 leading to cellular transformation. Regulates the activity of cellular genes, including c-myc and c-fos. May repress the promoter of p53, and sequester CREB3 and SP110 isoform 3/Sp110b in the cytoplasm. Represses cell cycle negative regulating factor CDKN1A, thereby interrupting an important check point of normal cell cycle regulation. Targets transcription factors involved in the regulation of inflammatory responses and in the immune response: suppresses TNF-induced NF-kappa-B activation, and activates AP-1. Binds to dendritic cells (DCs) via C1QR1, resulting in down-regulation of T-lymphocytes proliferation. Alters lipid metabolism by interacting with hepatocellular proteins involved in lipid accumulation and storage. Induces up-regulation of FAS promoter activity, and thereby contributes to the increased triglyceride accumulation in hepatocytes (steatosis). Its function is as follows. Forms a heterodimer with envelope glycoprotein E2, which mediates virus attachment to the host cell, virion internalization through clathrin-dependent endocytosis and fusion with host membrane. Fusion with the host cell is most likely mediated by both E1 and E2, through conformational rearrangements of the heterodimer required for fusion rather than a classical class II fusion mechanism. E1/E2 heterodimer binds host apolipoproteins such as APOB and ApoE thereby forming a lipo-viro-particle (LVP). APOE associated to the LVP allows the initial virus attachment to cell surface receptors such as the heparan sulfate proteoglycans (HSPGs), syndecan-1 (SDC1), syndecan-1 (SDC2), the low-density lipoprotein receptor (LDLR) and scavenger receptor class B type I (SCARB1). The cholesterol transfer activity of SCARB1 allows E2 exposure and binding of E2 to SCARB1 and the tetraspanin CD81. E1/E2 heterodimer binding on CD81 activates the epithelial growth factor receptor (EGFR) signaling pathway. Diffusion of the complex E1-E2-EGFR-SCARB1-CD81 to the cell lateral membrane allows further interaction with Claudin 1 (CLDN1) and occludin (OCLN) to finally trigger HCV entry. Forms a heterodimer with envelope glycoprotein E1, which mediates virus attachment to the host cell, virion internalization through clathrin-dependent endocytosis and fusion with host membrane. Fusion with the host cell is most likely mediated by both E1 and E2, through conformational rearrangements of the heterodimer required for fusion rather than a classical class II fusion mechanism. The interaction between envelope glycoprotein E2 and host apolipoprotein E/APOE allows the proper assembly, maturation and infectivity of the viral particles. This interaction is probably promoted via the up-regulation of cellular autophagy by the virus. E1/E2 heterodimer binds host apolipoproteins such as APOB and APOE thereby forming a lipo-viro-particle (LVP). APOE associated to the LVP allows the initial virus attachment to cell surface receptors such as the heparan sulfate proteoglycans (HSPGs), syndecan-1 (SDC1), syndecan-1 (SDC2), the low-density lipoprotein receptor (LDLR) and scavenger receptor class B type I (SCARB1). The cholesterol transfer activity of SCARB1 allows E2 exposure and binding of E2 to SCARB1 and the tetraspanin CD81. E1/E2 heterodimer binding on CD81 activates the epithelial growth factor receptor (EGFR) signaling pathway. Diffusion of the complex E1-E2-EGFR-SCARB1-CD81 to the cell lateral membrane allows further interaction with Claudin 1 (CLDN1) and occludin (OCLN) to finally trigger HCV entry. Inhibits host EIF2AK2/PKR activation, preventing the establishment of an antiviral state. Viral ligand for CD209/DC-SIGN and CLEC4M/DC-SIGNR, which are respectively found on dendritic cells (DCs), and on liver sinusoidal endothelial cells and macrophage-like cells of lymph node sinuses. These interactions allow the capture of circulating HCV particles by these cells and subsequent facilitated transmission to permissive cells such as hepatocytes and lymphocyte subpopulations. The interaction between E2 and host amino acid transporter complex formed by SLC3A2 and SLC7A5/LAT1 may facilitate viral entry into host cell. In terms of biological role, ion channel protein that acts as a viroporin and plays an essential role in the assembly, envelopment and secretion of viral particles. Regulates the host cell secretory pathway, which induces the intracellular retention of viral glycoproteins and favors assembly of viral particles. Creates a pore in acidic organelles and releases Ca(2+) and H(+) in the cytoplasm of infected cells, leading to a productive viral infection. High levels of cytoplasmic Ca(2+) may trigger membrane trafficking and transport of viral ER-associated proteins to viroplasms, sites of viral genome replication. This ionic imbalance induces the assembly of the inflammasome complex, which triggers the maturation of pro-IL-1beta into IL-1beta through the action of caspase-1. Targets also host mitochondria and induces mitochondrial depolarization. In addition of its role as a viroporin, acts as a lipid raft adhesion factor. Functionally, cysteine protease required for the proteolytic auto-cleavage between the non-structural proteins NS2 and NS3. The N-terminus of NS3 is required for the function of NS2 protease (active region NS2-3). Promotes the initiation of viral particle assembly by mediating the interaction between structural and non-structural proteins. Its function is as follows. Displays three enzymatic activities: serine protease with a chymotrypsin-like fold, NTPase and RNA helicase. NS3 serine protease, in association with NS4A, is responsible for the cleavages of NS3-NS4A, NS4A-NS4B, NS4B-NS5A and NS5A-NS5B. The NS3/NS4A complex prevents phosphorylation of host IRF3, thus preventing the establishment of dsRNA induced antiviral state. The NS3/NS4A complex induces host amino acid transporter component SLC3A2, thus contributing to HCV propagation. NS3 RNA helicase binds to RNA and unwinds both dsDNA and dsRNA in the 3' to 5' direction, and likely resolves RNA complicated stable secondary structures in the template strand. Binds a single ATP and catalyzes the unzipping of a single base pair of dsRNA. Inhibits host antiviral proteins TBK1 and IRF3 thereby preventing the establishment of an antiviral state. Cleaves host MAVS/CARDIF thereby preventing the establishment of an antiviral state. Cleaves host TICAM1/TRIF, thereby disrupting TLR3 signaling and preventing the establishment of an antiviral state. Peptide cofactor which forms a non-covalent complex with the N-terminal of NS3 serine protease. The NS3/NS4A complex prevents phosphorylation of host IRF3, thus preventing the establishment of dsRNA induced antiviral state. The NS3/NS4A complex induces host amino acid transporter component SLC3A2, thus contributing to HCV propagation. In terms of biological role, induces a specific membrane alteration that serves as a scaffold for the virus replication complex. This membrane alteration gives rise to the so-called ER-derived membranous web that contains the replication complex. NS4B self-interaction contributes to its function in membranous web formation. Promotes host TRIF protein degradation in a CASP8-dependent manner thereby inhibiting host TLR3-mediated interferon signaling. Disrupts the interaction between STING and TBK1 contributing to the inhibition of interferon signaling. Functionally, phosphorylated protein that is indispensable for viral replication and assembly. Both hypo- and hyperphosphorylated states are required for the viral life cycle. The hyperphosphorylated form of NS5A is an inhibitor of viral replication. Involved in RNA-binding and especially in binding to the viral genome. Zinc is essential for RNA-binding. Participates in the viral particle production as a result of its interaction with the mature viral core protein. Its interaction with host VAPB may target the viral replication complex to vesicles. Down-regulates viral IRES translation initiation. Mediates interferon resistance, presumably by interacting with and inhibiting host EIF2AK2/PKR. Prevents BIN1-induced apoptosis. Acts as a transcriptional activator of some host genes important for viral replication when localized in the nucleus. Via the interaction with host PACSIN2, modulates lipid droplet formation in order to promote virion assembly. Modulates TNFRSF21/DR6 signaling pathway for viral propagation. Its function is as follows. RNA-dependent RNA polymerase that performs primer-template recognition and RNA synthesis during viral replication. Initiates RNA transcription/replication at a flavin adenine dinucleotide (FAD), resulting in a 5'- FAD cap on viral RNAs. In this way, recognition of viral 5' RNA by host pattern recognition receptors can be bypassed, thereby evading activation of antiviral pathways. The sequence is that of Genome polyprotein from Hepatitis C virus genotype 2k (isolate VAT96) (HCV).